The primary structure comprises 169 residues: Queuosine precursor transporter QueT (169 aa).

5 consecutive transmembrane segments (helical) span residues 9–29, 44–64, 73–93, 110–130, and 137–157; these read IVTI…PGLS, LNFT…GCMI, VDVI…VLLF, FFFF…ELKF, and LLTW…GAFI.

The protein belongs to the vitamin uptake transporter (VUT/ECF) (TC 2.A.88) family. In terms of assembly, in E.coli forms a stable energy-coupling factor (ECF) transporter complex composed of 2 membrane-embedded substrate-binding protein (S component), 2 ATP-binding proteins (A and A' components) and 2 transmembrane proteins (T component), probably with a stoichiometry of 2:1:1:2. May be able to interact with more than 1 S component at a time.

The protein resides in the cell membrane. Probably a queuosine precursor-binding protein that interacts with the energy-coupling factor (ECF) ABC-transporter complex. Unlike classic ABC transporters this ECF transporter provides the energy necessary to transport a number of different substrates. The substrates themselves are bound by transmembrane, not extracytoplasmic soluble proteins. This is Queuosine precursor transporter QueT (queT) from Lactococcus lactis subsp. cremoris (strain MG1363).